The sequence spans 121 residues: Spermidine export protein MdtJ (121 aa).

Transmembrane regions (helical) follow at residues 1–21 (MYIY…GTLS), 32–52 (GGFI…SFAV), 55–75 (IALG…ITLF), and 82–102 (ESLS…IVLI).

It belongs to the drug/metabolite transporter (DMT) superfamily. Small multidrug resistance (SMR) (TC 2.A.7.1) family. MdtJ subfamily. Forms a complex with MdtI.

Its subcellular location is the cell inner membrane. Catalyzes the excretion of spermidine. The protein is Spermidine export protein MdtJ of Escherichia coli O139:H28 (strain E24377A / ETEC).